A 170-amino-acid chain; its full sequence is Prenyl-diphosphate phosphatase (170 aa).

Residues 25–155 enclose the Nudix hydrolase domain; the sequence is HIHRASQLIL…PGNYTPALRE (131 aa). Positions 59–83 match the Nudix box motif; that stretch reads YSVSGTVADESYEACIAREMLEEIG. 2 residues coordinate Mg(2+): Glu77 and Glu81.

It belongs to the Nudix hydrolase family. Mg(2+) is required as a cofactor.

It catalyses the reaction dimethylallyl diphosphate + H2O = dimethylallyl phosphate + phosphate + H(+). The catalysed reaction is isopentenyl diphosphate + H2O = isopentenyl phosphate + phosphate + H(+). It carries out the reaction (2E,6E)-farnesyl diphosphate + H2O = (2E,6E)-farnesyl phosphate + phosphate + H(+). The enzyme catalyses (2E)-geranyl diphosphate + H2O = (2E)-geranyl phosphate + phosphate + H(+). It functions in the pathway isoprenoid biosynthesis. Its function is as follows. Hydrolyzes homoallylic isopentenyl diphosphate (IPP), its allylic isomer dimethylallyl diphosphate (DMAPP) and short-chain prenyl diphosphates geranyl diphosphate (GPP) and farnesyl diphosphate (FPP) to their corresponding monophosphate forms with high activity. The preferred substrate is IPP. ADP, NADPH, Ap5A and thiamine diphosphate (TPP) are weakly hydrolyzed. No hydrolysis with ATP, dNTPs, 8-OH-dGTP, NAD+, FAD or acetyl-CoA. The likely physiological role of this enzyme is to provide a substrate dimethylallyl phosphate (DMAP) for prenylated flavin mononucleotide (prenyl-FMN) synthase MM_1871 involved in the biosynthesis of prenyl-FMN, a coenzyme required in the archaea-specific mevalonate pathway. The chain is Prenyl-diphosphate phosphatase from Methanosarcina mazei (strain ATCC BAA-159 / DSM 3647 / Goe1 / Go1 / JCM 11833 / OCM 88) (Methanosarcina frisia).